The chain runs to 358 residues: Probable branched-chain-amino-acid aminotransferase (358 aa).

Lysine 196 bears the N6-(pyridoxal phosphate)lysine mark.

The protein belongs to the class-IV pyridoxal-phosphate-dependent aminotransferase family. The cofactor is pyridoxal 5'-phosphate.

The enzyme catalyses L-leucine + 2-oxoglutarate = 4-methyl-2-oxopentanoate + L-glutamate. It catalyses the reaction L-isoleucine + 2-oxoglutarate = (S)-3-methyl-2-oxopentanoate + L-glutamate. The catalysed reaction is L-valine + 2-oxoglutarate = 3-methyl-2-oxobutanoate + L-glutamate. It participates in amino-acid biosynthesis; L-isoleucine biosynthesis; L-isoleucine from 2-oxobutanoate: step 4/4. It functions in the pathway amino-acid biosynthesis; L-leucine biosynthesis; L-leucine from 3-methyl-2-oxobutanoate: step 4/4. The protein operates within amino-acid biosynthesis; L-valine biosynthesis; L-valine from pyruvate: step 4/4. Acts on leucine, isoleucine and valine. This chain is Probable branched-chain-amino-acid aminotransferase (ilvE), found in Staphylococcus epidermidis (strain ATCC 12228 / FDA PCI 1200).